The chain runs to 171 residues: Calcium-binding protein F-like (171 aa).

EF-hand domains follow at residues 6–41, 57–80, 89–124, and 130–159; these read KIFE…KMNG, IDMD…KAKK, AALA…RGYT, and DQYL…RRID. 5 residues coordinate Ca(2+): Asp-19, Asn-21, Asp-23, Ser-25, and Asp-30. 10 residues coordinate Ca(2+): Asp-102, Asp-104, Asp-106, Lys-108, Glu-113, Asp-137, Asp-139, Asp-141, Cys-143, and Glu-148.

This is Calcium-binding protein F-like (cbp12) from Dictyostelium discoideum (Social amoeba).